Here is a 715-residue protein sequence, read N- to C-terminus: Ribosomal RNA large subunit methyltransferase K/L (715 aa).

Residues 47–158 enclose the THUMP domain; sequence LGYKISLWTR…RDNVTIFLDF (112 aa).

This sequence belongs to the methyltransferase superfamily. RlmKL family.

Its subcellular location is the cytoplasm. It carries out the reaction guanosine(2445) in 23S rRNA + S-adenosyl-L-methionine = N(2)-methylguanosine(2445) in 23S rRNA + S-adenosyl-L-homocysteine + H(+). The catalysed reaction is guanosine(2069) in 23S rRNA + S-adenosyl-L-methionine = N(2)-methylguanosine(2069) in 23S rRNA + S-adenosyl-L-homocysteine + H(+). Its function is as follows. Specifically methylates the guanine in position 2445 (m2G2445) and the guanine in position 2069 (m7G2069) of 23S rRNA. The protein is Ribosomal RNA large subunit methyltransferase K/L of Colwellia psychrerythraea (strain 34H / ATCC BAA-681) (Vibrio psychroerythus).